The chain runs to 164 residues: Large ribosomal subunit protein uL15 (164 aa).

The span at 1–14 shows a compositional bias: polar residues; sequence MKLNEIQDNPGSSK. The disordered stretch occupies residues 1–35; the sequence is MKLNEIQDNPGSSKSRMRVGRGIGSGKGKTCGRGV. Positions 21-35 are enriched in gly residues; the sequence is RGIGSGKGKTCGRGV.

This sequence belongs to the universal ribosomal protein uL15 family. Part of the 50S ribosomal subunit.

In terms of biological role, binds to the 23S rRNA. This Methylocella silvestris (strain DSM 15510 / CIP 108128 / LMG 27833 / NCIMB 13906 / BL2) protein is Large ribosomal subunit protein uL15.